Here is a 411-residue protein sequence, read N- to C-terminus: Efflux pump periplasmic linker BepF (411 aa).

Residues Phe118–Gly196 adopt a coiled-coil conformation.

It belongs to the membrane fusion protein (MFP) (TC 8.A.1) family. As to quaternary structure, probably part of a tripartite efflux pump, which is composed of an outer membrane efflux protein, an inner membrane protein and a protein that expands the periplasmic space. Could form a tripartite pump with BepC and BepG.

Its subcellular location is the periplasm. May contribute to resistance to some drugs, such as deoxycholate, sodium dodecyl sulfate and nalidixic acid, in the absence of BepD and BepE. In Brucella suis biovar 1 (strain 1330), this protein is Efflux pump periplasmic linker BepF (bepF).